A 628-amino-acid polypeptide reads, in one-letter code: 1-deoxy-D-xylulose-5-phosphate synthase (628 aa).

Residues H72 and 113–115 (GHS) each bind thiamine diphosphate. D144 contacts Mg(2+). Thiamine diphosphate is bound by residues 145–146 (GA), N173, Y284, and E366. Residue N173 participates in Mg(2+) binding.

This sequence belongs to the transketolase family. DXPS subfamily. As to quaternary structure, homodimer. It depends on Mg(2+) as a cofactor. Thiamine diphosphate is required as a cofactor.

It catalyses the reaction D-glyceraldehyde 3-phosphate + pyruvate + H(+) = 1-deoxy-D-xylulose 5-phosphate + CO2. It functions in the pathway metabolic intermediate biosynthesis; 1-deoxy-D-xylulose 5-phosphate biosynthesis; 1-deoxy-D-xylulose 5-phosphate from D-glyceraldehyde 3-phosphate and pyruvate: step 1/1. Functionally, catalyzes the acyloin condensation reaction between C atoms 2 and 3 of pyruvate and glyceraldehyde 3-phosphate to yield 1-deoxy-D-xylulose-5-phosphate (DXP). This chain is 1-deoxy-D-xylulose-5-phosphate synthase, found in Shouchella clausii (strain KSM-K16) (Alkalihalobacillus clausii).